The following is a 321-amino-acid chain: MGHVLSFTHCKDAPSTASSTPDSCPPEGEEDDSPVTEVNFWPLPSPHEPTFSYITIGSTAPLSRPPVRARRGLGQSRVHAAPREETEEKEVKDVVTYVLLEKTCQLKKLSPPHVQEEVVFVAKPQPQLEVFRAVKDLLYWRDILLSAGCLTGVTLSLLCLSQFSVISVFAYGCLIILSVTLTLRLYTKLLHALKRGNGANPFQYYLDADLKLTTKQAEEITARVLSLLSTTICTLRSLFLVEELKDSLKFLVIIYLLTYVGAVFNGITVLLLCVIGAFTFPILYKQHQTQVDHYVSLVSKKGNAFRSKIQGTVKKPPAKQK.

2 disordered regions span residues 1-36 and 65-85; these read MGHV…SPVT and PPVR…PREE. In terms of domain architecture, Reticulon spans 134-321; the sequence is VKDLLYWRDI…TVKKPPAKQK (188 aa). 2 helical membrane-spanning segments follow: residues 163 to 183 and 250 to 270; these read FSVI…TLTL and FLVI…ITVL.

The protein resides in the endoplasmic reticulum membrane. It is found in the sarcoplasmic reticulum membrane. The protein localises to the cell membrane. It localises to the sarcolemma. Its subcellular location is the T-tubule. The protein resides in the cytoplasm. It is found in the myofibril. The protein localises to the sarcomere. It localises to the z line. Its subcellular location is the cytoskeleton. Functionally, inhibits amyloid precursor protein processing, probably by blocking BACE1 activity. Enhances trafficking of the glutamate transporter SLC1A1/EAAC1 from the endoplasmic reticulum to the cell surface. Plays a role in the translocation of SLC2A4/GLUT4 from intracellular membranes to the cell membrane which facilitates the uptake of glucose into the cell. The chain is Reticulon-2 from Xenopus tropicalis (Western clawed frog).